Reading from the N-terminus, the 664-residue chain is PAN2-PAN3 deadenylation complex subunit PAN3 (664 aa).

Disordered regions lie at residues 1-27 (MATT…GREN) and 54-134 (DPHK…PGTM). The C3H1-type zinc-finger motif lies at 27-56 (NAKDTLCRNVTIYGRCRYEDKGCAFNHDPH). Residues 74 to 96 (DSPSFTPSILSSNGSSPTSQSAT) show a composition bias toward polar residues. A compositionally biased stretch (low complexity) spans 115–131 (PRSISSRSNSSTPTTRP). The segment at 265–525 (QTLPNTQLPA…NIDIFITGIS (261 aa)) is pseudokinase domain. Residues R317, 366–373 (DYHPLSKT), and 425–426 (SK) each bind ATP. A coiled-coil region spans residues 526 to 564 (STLMSTFDSALHLDDQLTSDLSRELENGRLVRLMTKLNF). Residues 565-664 (VNERPEYEHD…LKPSASRRLH (100 aa)) form a knob domain region.

Belongs to the protein kinase superfamily. PAN3 family. Homodimer. Forms a heterotrimer with a catalytic subunit pan2 to form the poly(A)-nuclease (PAN) deadenylation complex. Interacts (via PAM-2 motif) with poly(A)-binding protein pab1 (via PABC domain), conferring substrate specificity of the enzyme complex.

The protein localises to the cytoplasm. Its function is as follows. Regulatory subunit of the poly(A)-nuclease (PAN) deadenylation complex, one of two cytoplasmic mRNA deadenylases involved in mRNA turnover. PAN specifically shortens poly(A) tails of RNA and the activity is stimulated by poly(A)-binding protein pab1. PAN deadenylation is followed by rapid degradation of the shortened mRNA tails by the CCR4-NOT complex. Deadenylated mRNAs are then degraded by two alternative mechanisms, namely exosome-mediated 3'-5' exonucleolytic degradation, or deadenylation-dependent mRNA decaping and subsequent 5'-3' exonucleolytic degradation by xrn1. May also be involved in post-transcriptional maturation of mRNA poly(A) tails. pan3 acts as a positive regulator for PAN activity, recruiting the catalytic subunit pan2 to mRNA via its interaction with RNA and with pab1. In Aspergillus niger (strain ATCC MYA-4892 / CBS 513.88 / FGSC A1513), this protein is PAN2-PAN3 deadenylation complex subunit PAN3.